We begin with the raw amino-acid sequence, 160 residues long: 2-amino-4-hydroxy-6-hydroxymethyldihydropteridine pyrophosphokinase (160 aa).

This sequence belongs to the HPPK family.

It catalyses the reaction 6-hydroxymethyl-7,8-dihydropterin + ATP = (7,8-dihydropterin-6-yl)methyl diphosphate + AMP + H(+). It participates in cofactor biosynthesis; tetrahydrofolate biosynthesis; 2-amino-4-hydroxy-6-hydroxymethyl-7,8-dihydropteridine diphosphate from 7,8-dihydroneopterin triphosphate: step 4/4. Catalyzes the transfer of pyrophosphate from adenosine triphosphate (ATP) to 6-hydroxymethyl-7,8-dihydropterin, an enzymatic step in folate biosynthesis pathway. This chain is 2-amino-4-hydroxy-6-hydroxymethyldihydropteridine pyrophosphokinase (folK), found in Aquifex aeolicus (strain VF5).